A 670-amino-acid chain; its full sequence is MSHLPMKLLRKKIEKRNLKLRQRNLKFQGASNLTLSETQNGDVSEETMGSRKVKKSKQKPMNVGLSETQNGGMSQEAVGNIKVTKSPQKSTVLTNGEAAMQSSNSESKKKKKKKRKMVNDAEPDTKKAKTENKGKSEEESAETTKETENNVEKPDNDEDESEVPSLPLGLTGAFEDTSFASLCNLVNENTLKAIKEMGFTNMTEIQHKSIRPLLEGRDLLAAAKTGSGKTLAFLIPAVELIVKLRFMPRNGTGVLILSPTRELAMQTFGVLKELMTHHVHTYGLIMGGSNRSAEAQKLGNGINIIVATPGRLLDHMQNTPGFMYKNLQCLVIDEADRILDVGFEEELKQIIKLLPTRRQTMLFSATQTRKVEDLARISLKKEPLYVGVDDDKANATVDGLEQGYVVCPSEKRFLLLFTFLKKNRKKKLMVFFSSCMSVKYHYELLNYIDLPVLAIHGKQKQNKRTTTFFQFCNADSGTLLCTDVAARGLDIPEVDWIVQYDPPDDPKEYIHRVGRTARGLNGRGHALLILRPEELGFLRYLKQSKVPLSEFDFSWSKISDIQSQLEKLIEKNYFLHKSAQEAYKSYIRAYDSHSLKQIFNVNNLNLPQVALSFGFKVPPFVDLNVNSNEGKQKKRGGGGGFGYQKTKKVEKSKIFKHISKKSSDSRQFSH.

Polar residues-rich tracts occupy residues 31–42 and 83–105; these read SNLTLSETQNGD and VTKSPQKSTVLTNGEAAMQSSNS. Residues 31–169 are disordered; it reads SNLTLSETQN…ESEVPSLPLG (139 aa). A compositionally biased stretch (basic and acidic residues) spans 117-154; sequence MVNDAEPDTKKAKTENKGKSEEESAETTKETENNVEKP. Residues 179 to 207 carry the Q motif motif; sequence FASLCNLVNENTLKAIKEMGFTNMTEIQH. The Helicase ATP-binding domain maps to 210 to 385; the sequence is IRPLLEGRDL…RISLKKEPLY (176 aa). Position 223–230 (223–230) interacts with ATP; it reads AKTGSGKT. The DEAD box signature appears at 333-336; sequence DEAD. Positions 399–569 constitute a Helicase C-terminal domain; the sequence is GLEQGYVVCP…DIQSQLEKLI (171 aa).

The protein belongs to the DEAD box helicase family. DDX18/HAS1 subfamily. Interacts with NOL8; the interaction is RNA-dependent. Interacts with PRC2 complex components EZH2, SUZ2 and JARID2; these interactions prevent deposition of the repressive H3K27me3 mark onto rDNA in pluripotent cells.

It localises to the nucleus. Its subcellular location is the nucleolus. It is found in the chromosome. The catalysed reaction is ATP + H2O = ADP + phosphate + H(+). Its function is as follows. ATP-dependent RNA helicase that plays a role in the regulation of R-loop homeostasis in both endogenous R-loop-prone regions and at sites of DNA damage. At endogenous loci such as actively transcribed genes, may act as a helicase to resolve the formation of R-loop during transcription and prevent the interference of R-loop with DNA-replication machinery. Also participates in the removal of DNA-lesion-associated R-loop. Plays an essential role for establishing pluripotency during embryogenesis and for pluripotency maintenance in embryonic stem cells. Mechanistically, prevents the polycomb repressive complex 2 (PRC2) from accessing rDNA loci and protects the active chromatin status in nucleolus. This is ATP-dependent RNA helicase DDX18 (DDX18) from Homo sapiens (Human).